We begin with the raw amino-acid sequence, 275 residues long: Large ribosomal subunit protein uL2 (275 aa).

Positions 208–275 are disordered; it reads AGAKRWRGRR…NMIIRDRRKK (68 aa). 2 stretches are compositionally biased toward basic residues: residues 209–219 and 254–263; these read GAKRWRGRRPT and KGYKTRRNKR.

This sequence belongs to the universal ribosomal protein uL2 family. Part of the 50S ribosomal subunit. Forms a bridge to the 30S subunit in the 70S ribosome.

Functionally, one of the primary rRNA binding proteins. Required for association of the 30S and 50S subunits to form the 70S ribosome, for tRNA binding and peptide bond formation. It has been suggested to have peptidyltransferase activity; this is somewhat controversial. Makes several contacts with the 16S rRNA in the 70S ribosome. This chain is Large ribosomal subunit protein uL2, found in Coxiella burnetii (strain CbuK_Q154) (Coxiella burnetii (strain Q154)).